The primary structure comprises 155 residues: Large ribosomal subunit protein uL30 (155 aa).

Belongs to the universal ribosomal protein uL30 family. Part of the 50S ribosomal subunit.

The sequence is that of Large ribosomal subunit protein uL30 from Nanoarchaeum equitans (strain Kin4-M).